Here is an 82-residue protein sequence, read N- to C-terminus: Chlorosome protein E (82 aa).

His26 contributes to the a bacteriochlorophyll c binding site. The segment at 55–82 is disordered; it reads GSSGLKGSSPKYSGYATPSKEVKSRFEK. Residues 59–69 are compositionally biased toward low complexity; it reads LKGSSPKYSGY.

This sequence belongs to the BChl C/E-binding protein family.

The protein localises to the chlorosome. It localises to the chlorosome envelope. In terms of biological role, component of the photosynthetic apparatus. The light harvesting B740 complex binds bacteriochlorophyll c. In Chlorobaculum tepidum (strain ATCC 49652 / DSM 12025 / NBRC 103806 / TLS) (Chlorobium tepidum), this protein is Chlorosome protein E (csmE).